A 464-amino-acid chain; its full sequence is Tyrosine aminotransferase (464 aa).

Lys284 carries the post-translational modification N6-(pyridoxal phosphate)lysine.

It belongs to the class-I pyridoxal-phosphate-dependent aminotransferase family. As to quaternary structure, homodimer. The cofactor is pyridoxal 5'-phosphate. In terms of tissue distribution, expressed in the muscle. Expressed in the hypodermis and intestine.

The catalysed reaction is L-tyrosine + 2-oxoglutarate = 3-(4-hydroxyphenyl)pyruvate + L-glutamate. It carries out the reaction 3-hydroxy-L-phenylalanine + 2-oxoglutarate = 3-(3-hydroxyphenyl)pyruvate + L-glutamate. It functions in the pathway amino-acid degradation; L-phenylalanine degradation; acetoacetate and fumarate from L-phenylalanine: step 2/6. Functionally, transaminase involved in tyrosine breakdown. Converts tyrosine to p-hydroxyphenylpyruvate. Has no transaminase activity towards phenylalanine. Plays protective role against oxidative stress, metabolizing meta-tyrosine and negatively regulating its accumulation. Plays a role in modulating the daf-2/insulin receptor-like transduction pathway through regulating tyrosine levels. Negatively regulates dauer formation. Plays a role in longevity. The sequence is that of Tyrosine aminotransferase from Caenorhabditis elegans.